The following is a 338-amino-acid chain: Heat-inducible transcription repressor HrcA (338 aa).

It belongs to the HrcA family.

Functionally, negative regulator of class I heat shock genes (grpE-dnaK-dnaJ and groELS operons). Prevents heat-shock induction of these operons. This is Heat-inducible transcription repressor HrcA from Nitrosomonas eutropha (strain DSM 101675 / C91 / Nm57).